The primary structure comprises 395 residues: S-adenosylmethionine synthase (395 aa).

Position 15 (histidine 15) interacts with ATP. Mg(2+) is bound at residue aspartate 17. Glutamate 43 serves as a coordination point for K(+). Glutamine 99 is an L-methionine binding site. Residues glutamine 99 to glutamate 109 form a flexible loop region. ATP-binding positions include aspartate 174–lysine 176, arginine 240–phenylalanine 241, aspartate 249, arginine 255–lysine 256, alanine 272, and lysine 276. Aspartate 249 is an L-methionine binding site. L-methionine is bound at residue lysine 280.

This sequence belongs to the AdoMet synthase family. Homotetramer; dimer of dimers. It depends on Mg(2+) as a cofactor. K(+) is required as a cofactor.

Its subcellular location is the cytoplasm. The catalysed reaction is L-methionine + ATP + H2O = S-adenosyl-L-methionine + phosphate + diphosphate. The protein operates within amino-acid biosynthesis; S-adenosyl-L-methionine biosynthesis; S-adenosyl-L-methionine from L-methionine: step 1/1. Its function is as follows. Catalyzes the formation of S-adenosylmethionine (AdoMet) from methionine and ATP. The overall synthetic reaction is composed of two sequential steps, AdoMet formation and the subsequent tripolyphosphate hydrolysis which occurs prior to release of AdoMet from the enzyme. The chain is S-adenosylmethionine synthase from Moorella thermoacetica (strain ATCC 39073 / JCM 9320).